The chain runs to 301 residues: Small ribosomal subunit protein uS2 (301 aa).

This sequence belongs to the universal ribosomal protein uS2 family. In terms of assembly, component of the small ribosomal subunit. Mature ribosomes consist of a small (40S) and a large (60S) subunit. The 40S subunit contains about 33 different proteins and 1 molecule of RNA (18S). The 60S subunit contains about 49 different proteins and 3 molecules of RNA (25S, 5.8S and 5S). Interacts with RPS21.

The protein localises to the cytoplasm. In terms of biological role, required for the assembly and/or stability of the 40S ribosomal subunit. Required for the processing of the 20S rRNA-precursor to mature 18S rRNA in a late step of the maturation of 40S ribosomal subunits. This Ajellomyces dermatitidis (strain ER-3 / ATCC MYA-2586) (Blastomyces dermatitidis) protein is Small ribosomal subunit protein uS2.